Consider the following 181-residue polypeptide: Oligoribonuclease (181 aa).

Positions 8–171 (LIWIDLEMTG…DDIRESIAEL (164 aa)) constitute an Exonuclease domain. Tyrosine 129 is an active-site residue.

The protein belongs to the oligoribonuclease family.

It is found in the cytoplasm. 3'-to-5' exoribonuclease specific for small oligoribonucleotides. This Vibrio cholerae serotype O1 (strain ATCC 39541 / Classical Ogawa 395 / O395) protein is Oligoribonuclease.